The primary structure comprises 357 residues: F-box only protein 25 (357 aa).

The segment at 1 to 83 (MPFLGQDWRS…DTAAHSFYRE (83 aa)) is interaction with beta-actin. The F-box domain occupies 225-273 (LTLSDLPLHMLNNILYRFSDGWDIVTLGQVTPTLYMLSEDRRLWKRLCQ).

In terms of assembly, part of a SCF (SKP1-cullin-F-box) protein ligase complex consisting of FBXO25, SKP1, CUL1 and RBX1. Interacts directly with SKP1 and CUL1. Interacts (via C-terminus) with beta-actin (via N-terminus). Expressed in all tissues tested, except striated muscle (at protein level). Expressed predominantly in the cerebral cortex, the hippocampus and the Purkinje cell layer of the brain. Intestine and kidney show also significant levels.

The protein resides in the nucleus. It participates in protein modification; protein ubiquitination. Its function is as follows. Substrate-recognition component of the SCF (SKP1-CUL1-F-box protein)-type E3 ubiquitin ligase complex. May play a role in accumulation of expanded polyglutamine (polyQ) protein huntingtin (HTT). This is F-box only protein 25 (Fbxo25) from Mus musculus (Mouse).